The chain runs to 202 residues: Matrix protein (202 aa).

The segment at 12 to 33 (RDEDTQKPSPVSAPPDDDDLWL) is disordered. The short motif at 35–38 (PPEY) is the PPXY motif element. The tract at residues 115–151 (KLRRTLIFQWADSRGPLEGEELEYSQEITWDDDTEFV) is essential for glycoprotein binding.

The protein belongs to the lyssavirus matrix protein family. In terms of assembly, homomultimer. Interacts with nucleoprotein and with the cytoplasmic domain of glycoprotein. Interacts with host ATP6V1A; this interaction plays an important role in virion uncoating after viral entry.

The protein resides in the virion membrane. It localises to the host endomembrane system. Its subcellular location is the host cytoplasm. Plays a major role in assembly, budding and uncoating of virion after membrane fusion. Completely covers the ribonucleoprotein coil and keep it in condensed bullet-shaped form. Inhibits viral transcription and stimulates replication. Plays a major role in early induction of TRAIL-mediated apoptosis in infected neurons. Inhibits the integrated stress response (ISR) in the infected cell by blocking the formation of stress granules. The chain is Matrix protein (M) from Rabies virus (strain PM1503/AVO1) (RABV).